Here is a 561-residue protein sequence, read N- to C-terminus: uncharacterized protein (561 aa).

Disordered regions lie at residues 369–390 (SVPENGKPNMGRIPSAPSLSKG) and 429–515 (EGLG…GESE). Phosphoserine is present on Ser383. Positions 465-503 (NISPESSRFGTPSDPNSSSQSLGNEVLSRPNSNSNSAES) are enriched in polar residues.

This is an uncharacterized protein from Schizosaccharomyces pombe (strain 972 / ATCC 24843) (Fission yeast).